The following is a 441-amino-acid chain: Proline--tRNA ligase (441 aa).

It belongs to the class-II aminoacyl-tRNA synthetase family. ProS type 2 subfamily. In terms of assembly, homodimer.

The protein resides in the cytoplasm. The enzyme catalyses tRNA(Pro) + L-proline + ATP = L-prolyl-tRNA(Pro) + AMP + diphosphate. Functionally, catalyzes the attachment of proline to tRNA(Pro) in a two-step reaction: proline is first activated by ATP to form Pro-AMP and then transferred to the acceptor end of tRNA(Pro). This Bartonella quintana (strain Toulouse) (Rochalimaea quintana) protein is Proline--tRNA ligase.